A 306-amino-acid chain; its full sequence is Light-independent protochlorophyllide reductase iron-sulfur ATP-binding protein (306 aa).

A disordered region spans residues 1–31 (MREAAGLEARGLKSPPILKGQDGEGSLQVHQ). ATP is bound by residues 50 to 55 (GIGKST) and lysine 79. A Mg(2+)-binding site is contributed by serine 54. Residues cysteine 135 and cysteine 169 each contribute to the [4Fe-4S] cluster site. 220 to 221 (NR) contacts ATP.

It belongs to the NifH/BchL/ChlL family. In terms of assembly, homodimer. Protochlorophyllide reductase is composed of three subunits; BchL, BchN and BchB. It depends on [4Fe-4S] cluster as a cofactor.

The catalysed reaction is chlorophyllide a + oxidized 2[4Fe-4S]-[ferredoxin] + 2 ADP + 2 phosphate = protochlorophyllide a + reduced 2[4Fe-4S]-[ferredoxin] + 2 ATP + 2 H2O. It participates in porphyrin-containing compound metabolism; bacteriochlorophyll biosynthesis (light-independent). In terms of biological role, component of the dark-operative protochlorophyllide reductase (DPOR) that uses Mg-ATP and reduced ferredoxin to reduce ring D of protochlorophyllide (Pchlide) to form chlorophyllide a (Chlide). This reaction is light-independent. The L component serves as a unique electron donor to the NB-component of the complex, and binds Mg-ATP. The chain is Light-independent protochlorophyllide reductase iron-sulfur ATP-binding protein from Jannaschia sp. (strain CCS1).